The chain runs to 217 residues: External core antigen (217 aa).

A signal peptide spans 1–20; the sequence is MYLFHLCLVFACVPCPTVQA. Residues 26-28 are HBEAG; the sequence is GWL. The disordered stretch occupies residues 166-217; it reads APILSTLPEHTVIRRRGGSRAARSPRRRTPSPRRRRSQSPRRRRSQSPASNC. Residues 178 to 210 are compositionally biased toward basic residues; the sequence is IRRRGGSRAARSPRRRTPSPRRRRSQSPRRRRS. The stretch at 189-195 is one 1; half-length repeat; sequence SPRRRTP. The tract at residues 189 to 211 is 3 X 8 AA repeats of S-P-R-R-R-R-S-Q; the sequence is SPRRRTPSPRRRRSQSPRRRRSQ. A propeptide spanning residues 189-217 is cleaved from the precursor; sequence SPRRRTPSPRRRRSQSPRRRRSQSPASNC. 2 tandem repeats follow at residues 196-203 and 204-211.

It belongs to the orthohepadnavirus precore antigen family. As to quaternary structure, homodimerizes. Phosphorylated. Post-translationally, cleaved by host furin.

It localises to the secreted. It is found in the host nucleus. Functionally, may regulate immune response to the intracellular capsid in acting as a T-cell tolerogen, by having an immunoregulatory effect which prevents destruction of infected cells by cytotoxic T-cells. This immune regulation may predispose to chronicity during perinatal infections and prevent severe liver injury during adult infections. The protein is External core antigen of Otospermophilus beecheyi (California ground squirrel).